Here is a 430-residue protein sequence, read N- to C-terminus: Glutamate-1-semialdehyde 2,1-aminomutase (430 aa).

K269 bears the N6-(pyridoxal phosphate)lysine mark.

It belongs to the class-III pyridoxal-phosphate-dependent aminotransferase family. HemL subfamily. Homodimer. It depends on pyridoxal 5'-phosphate as a cofactor.

Its subcellular location is the cytoplasm. It catalyses the reaction (S)-4-amino-5-oxopentanoate = 5-aminolevulinate. It functions in the pathway porphyrin-containing compound metabolism; protoporphyrin-IX biosynthesis; 5-aminolevulinate from L-glutamyl-tRNA(Glu): step 2/2. The protein is Glutamate-1-semialdehyde 2,1-aminomutase of Desulfitobacterium hafniense (strain Y51).